A 328-amino-acid polypeptide reads, in one-letter code: Ferredoxin--NADP reductase 1 (328 aa).

Positions 28, 36, 41, 81, 116, 277, and 320 each coordinate FAD.

It belongs to the ferredoxin--NADP reductase type 2 family. Homodimer. FAD serves as cofactor.

It catalyses the reaction 2 reduced [2Fe-2S]-[ferredoxin] + NADP(+) + H(+) = 2 oxidized [2Fe-2S]-[ferredoxin] + NADPH. The chain is Ferredoxin--NADP reductase 1 from Sulfolobus acidocaldarius (strain ATCC 33909 / DSM 639 / JCM 8929 / NBRC 15157 / NCIMB 11770).